The following is a 616-amino-acid chain: Pentatricopeptide repeat-containing protein At4g15720 (616 aa).

10 PPR repeats span residues 63-93 (DTFTVNHLVISYVKLKEINTARKLFDEMCEP), 94-128 (NVVSWTSVISGYNDMGKPQNALSMFQKMHEDRPVP), 130-164 (NEYTFASVFKACSALAESRIGKNIHARLEISGLRR), 165-199 (NIVVSSSLVDMYGKCNDVETARRVFDSMIGYGRNV), 200-228 (VSWTSMITAYAQNARGHEAIELFRSFNAA), 235-269 (NQFMLASVISACSSLGRLQWGKVAHGLVTRGGYES), 270-300 (NTVVATSLLDMYAKCGSLSCAEKIFLRIRCH), 301-335 (SVISYTSMIMAKAKHGLGEAAVKLFDEMVAGRINP), 336-371 (NYVTLLGVLHACSHSGLVNEGLEYLSLMAEKYGVVP), and 372-402 (DSRHYTCVVDMLGRFGRVDEAYELAKTIEVG). Positions 409–484 (LWGALLSAGR…ERACSWIENK (76 aa)) are type E motif. Positions 485–515 (DSVYVFHAGDLSCDESGEIERFLKDLEKRMK) are type E(+) motif. Residues 522–616 (SSSMITTSSS…NGSCTCRDYW (95 aa)) are type DYW motif.

It belongs to the PPR family. PCMP-H subfamily.

This is Pentatricopeptide repeat-containing protein At4g15720 (PCMP-H1) from Arabidopsis thaliana (Mouse-ear cress).